Here is a 647-residue protein sequence, read N- to C-terminus: Pre-mRNA-splicing factor SLU7 (647 aa).

Polar residues predominate over residues 1–19; the sequence is MASYKQNLPPSALIKQQVN. Residues 1 to 44 form a disordered region; sequence MASYKQNLPPSALIKQQVNVADKKSKAEVQRDRQLEEDRKAGTA. The span at 21-41 shows a compositional bias: basic and acidic residues; the sequence is ADKKSKAEVQRDRQLEEDRKA. The CCHC-type zinc finger occupies 113 to 130; the sequence is GACENCGAMGHQKRDCFD. Disordered regions lie at residues 193 to 212 and 465 to 620; these read HEMKEGEVEPATTEDGAPKD and EVKE…KEME. Basic and acidic residues predominate over residues 465-479; the sequence is EVKEEKEKEDSIKDE. Residues 480–491 show a composition bias toward acidic residues; sequence VAEENSDNDNDE. Basic and acidic residues predominate over residues 513-533; that stretch reads EKEREKERLIEKERRERDQRR. Basic residues predominate over residues 534-555; it reads RDKKREKRERKKAKLGKRKRRH. The span at 588–606 shows a compositional bias: basic and acidic residues; sequence EKAEGMKAAREGDRGRKYN.

Belongs to the SLU7 family.

It is found in the nucleus. Its function is as follows. Participates in the second catalytic step of pre-mRNA splicing, when the free hydroxyl group of exon I attacks the 3'-splice site to generate spliced mRNA and the excised lariat intron. This is Pre-mRNA-splicing factor SLU7 from Caenorhabditis elegans.